Consider the following 457-residue polypeptide: tRNA-2-methylthio-N(6)-dimethylallyladenosine synthase (457 aa).

Positions 3–120 constitute an MTTase N-terminal domain; that stretch reads KKVYVKTFGC…LPQMIDKRRE (118 aa). [4Fe-4S] cluster-binding residues include Cys12, Cys49, Cys83, Cys157, Cys161, and Cys164. The Radical SAM core domain maps to 143–377; the sequence is RVDGPSAFVS…QATIEENVQR (235 aa). Positions 380-447 constitute a TRAM domain; the sequence is DSMVGKIERI…PHSLRGELVL (68 aa).

The protein belongs to the methylthiotransferase family. MiaB subfamily. Monomer. Requires [4Fe-4S] cluster as cofactor.

The protein localises to the cytoplasm. The enzyme catalyses N(6)-dimethylallyladenosine(37) in tRNA + (sulfur carrier)-SH + AH2 + 2 S-adenosyl-L-methionine = 2-methylsulfanyl-N(6)-dimethylallyladenosine(37) in tRNA + (sulfur carrier)-H + 5'-deoxyadenosine + L-methionine + A + S-adenosyl-L-homocysteine + 2 H(+). Its function is as follows. Catalyzes the methylthiolation of N6-(dimethylallyl)adenosine (i(6)A), leading to the formation of 2-methylthio-N6-(dimethylallyl)adenosine (ms(2)i(6)A) at position 37 in tRNAs that read codons beginning with uridine. This is tRNA-2-methylthio-N(6)-dimethylallyladenosine synthase from Paraburkholderia xenovorans (strain LB400).